The following is a 506-amino-acid chain: ATP synthase subunit alpha, chloroplastic (506 aa).

170 to 177 is a binding site for ATP; that stretch reads GDRQTGKT.

The protein belongs to the ATPase alpha/beta chains family. As to quaternary structure, F-type ATPases have 2 components, CF(1) - the catalytic core - and CF(0) - the membrane proton channel. CF(1) has five subunits: alpha(3), beta(3), gamma(1), delta(1), epsilon(1). CF(0) has four main subunits: a, b, b' and c.

It localises to the plastid. It is found in the chloroplast thylakoid membrane. The catalysed reaction is ATP + H2O + 4 H(+)(in) = ADP + phosphate + 5 H(+)(out). Produces ATP from ADP in the presence of a proton gradient across the membrane. The alpha chain is a regulatory subunit. This chain is ATP synthase subunit alpha, chloroplastic, found in Chlorokybus atmophyticus (Soil alga).